The primary structure comprises 342 residues: Epoxide hydrolase srdG (342 aa).

Residues 44–332 form the AB hydrolase-1 domain; it reads ATVLLLHGWP…LIHTPEEVNK (289 aa). Asp-122 serves as the catalytic Nucleophile. The active-site Proton acceptor is the His-320.

This sequence belongs to the AB hydrolase superfamily. Epoxide hydrolase family.

Highly reducing polyketide synthase; part of the gene cluster that mediates the biosynthesis of sordarial, a salicylic aldehyde structurally related to the phytotoxin pyriculol. The most interesting aspect of this pathway is formation of an aromatic product from the highly reducing polyketide synthase srdA. SrdA synthesizes a reduced polyketide chain from one molecule of acetyl-CoA and five molecules of malonyl-CoA. The polyketide chain is then reductively released as an aldehyde. The oxidoreductases srdC, srdD and srdE then oxidize one of the hydroxy groups to facilitate the intramolecular aldol condensation, followed by dehydration to yield a salicylic aldehyde. This aldehyde can undergo facile reduction by endogenous reductases to yield the alcohol 1-hydroxy-2-hydroxymethyl-3-pent-1,3-dienylbenzene. The flavin-dependent srdI counteract against the propensity of the aldehydes to be reduced under physiological conditions and is responsible for reoxidizing 1-hydroxy-2-hydroxymethyl-3-pent-1,3-dienylbenzene back to the salicylic aldehyde. This salicylic aldehyde is then selectively epoxidized by the cupin-domain-containing oxidoreductase srdB to yield the epoxide, which can be hydrolyzed stereoselectively by the hydrolase srdG to give the final product sordarial. This Neurospora crassa (strain ATCC 24698 / 74-OR23-1A / CBS 708.71 / DSM 1257 / FGSC 987) protein is Epoxide hydrolase srdG.